The following is a 501-amino-acid chain: Beta-secretase 1 (501 aa).

The signal sequence occupies residues 1–21 (MAPALRWLLLWVGSGMLPAQG). The propeptide occupies 22 to 45 (THLGIRLPLRSGLAGPPLGLRLPR). Over 22 to 457 (THLGIRLPLR…PQTDESTLMT (436 aa)) the chain is Extracellular. In terms of domain architecture, Peptidase A1 spans 75–416 (YYVEMTVGSP…DRARKRIGFA (342 aa)). Asp93 is a catalytic residue. At Lys126 the chain carries N6-acetyllysine. N-linked (GlcNAc...) asparagine glycosylation is found at Asn153, Asn172, and Asn223. Disulfide bonds link Cys216–Cys420, Cys278–Cys443, and Cys330–Cys380. An N6-acetyllysine mark is found at Lys275, Lys279, and Lys285. Asp289 is a catalytic residue. Lys299, Lys300, and Lys307 each carry N6-acetyllysine. Asn354 carries an N-linked (GlcNAc...) asparagine glycan. Residues 458 to 478 (IAYVMAAICALFMLPLCLMVC) form a helical membrane-spanning segment. 4 S-palmitoyl cysteine lipidation sites follow: Cys474, Cys478, Cys482, and Cys485. Residues 479–501 (QWRCLRCLRHQHDDFADDISLLK) lie on the Cytoplasmic side of the membrane. An interaction with RTN3 region spans residues 479–501 (QWRCLRCLRHQHDDFADDISLLK). A DXXLL motif is present at residues 496–500 (DISLL). Position 498 is a phosphoserine (Ser498). Lys501 is covalently cross-linked (Glycyl lysine isopeptide (Lys-Gly) (interchain with G-Cter in ubiquitin)).

The protein belongs to the peptidase A1 family. As to quaternary structure, monomer. Interacts (via DXXLL motif) with GGA1, GGA2 and GGA3 (via their VHS domain); the interaction highly increases when BACE1 is phosphorylated at Ser-498. Interacts with RTN1; RTN2; RTN3 and RTN4; the interaction leads to inhibition of amyloid precursor protein processing. Interacts with SNX6. Interacts with PCSK9. Interacts with NAT8 and NAT8B. Interacts with BIN1. Interacts (via extracellular domain) with ADAM10 (via extracellular domain). Interacts with SORL1; this interaction may affect binding with APP and hence reduce APP cleavage. Interacts with NRDC AND NRG1. Palmitoylation mediates lipid raft localization. Post-translationally, acetylated in the endoplasmic reticulum at Lys-126, Lys-275, Lys-279, Lys-285, Lys-299, Lys-300 and Lys-307. Acetylation by NAT8 and NAT8B is transient and deacetylation probably occurs in the Golgi. Acetylation regulates the maturation, the transport to the plasma membrane, the stability and the expression of the protein. In terms of processing, ubiquitinated at Lys-501, ubiquitination leads to lysosomal degradation. Monoubiquitinated and 'Lys-63'-linked polyubitinated. Deubiquitnated by USP8; inhibits lysosomal degradation. Phosphorylation at Ser-498 is required for interaction with GGA1 and retrograded transport from endosomal compartments to the trans-Golgi network. Non-phosphorylated BACE1 enters a direct recycling route to the cell surface. Post-translationally, N-Glycosylated. Addition of a bisecting N-acetylglucosamine by MGAT3 blocks lysosomal targeting, further degradation and is required for maintaining stability under stress conditions.

The protein localises to the cell membrane. It localises to the golgi apparatus. The protein resides in the trans-Golgi network. Its subcellular location is the endoplasmic reticulum. It is found in the endosome. The protein localises to the cell surface. It localises to the cytoplasmic vesicle membrane. The protein resides in the membrane raft. Its subcellular location is the lysosome. It is found in the late endosome. The protein localises to the early endosome. It localises to the recycling endosome. The protein resides in the cell projection. Its subcellular location is the axon. It is found in the dendrite. The catalysed reaction is Broad endopeptidase specificity. Cleaves Glu-Val-Asn-Leu-|-Asp-Ala-Glu-Phe in the Swedish variant of Alzheimer's amyloid precursor protein.. With respect to regulation, inhibited by RTN3 and RTN4. In terms of biological role, responsible for the proteolytic processing of the amyloid precursor protein (APP). Cleaves at the N-terminus of the A-beta peptide sequence, between residues 671 and 672 of APP, leads to the generation and extracellular release of beta-cleaved soluble APP, and a corresponding cell-associated C-terminal fragment which is later released by gamma-secretase. Cleaves CHL1. The sequence is that of Beta-secretase 1 (Bace1) from Rattus norvegicus (Rat).